A 422-amino-acid polypeptide reads, in one-letter code: MAKTIQAIRGMNDCLPTQSPLWQKVEGSVKRVISAYGYNEVRMPIVEQTHLFKRAIGEVTDVVEKEMYTFEDRNGDSLTLRPEGTAGCVRAGIENGLLYNQEQRLWYMGPMFRHERPQKGRYRQFHQVGVEVFGLNGPDVDAELIMMTARLWRELGIDQHVRLELNSIGSLEARANYRTALVAFLEQHLDVLDEDCKRRMHTNPMRVLDTKNPDVQAILGDAPKLSEYLDDDSKAHFSGLCELLDAAGIQYQVNERLVRGLDYYNRTVFEWITESLGAQGTVCGGGRYDGLVEQLGGKTTPAVGFAMGLERLVLLMETLELTDVRRSVDVYMVTAGEGTLMAGMKLAESLREQVPGLRVMCHFGGGNFKKQFKRADNAGAAVALILGETEVAEQTVNVKDLRNGEQVTLPQSDVFTKLAELI.

The protein belongs to the class-II aminoacyl-tRNA synthetase family. Homodimer.

It localises to the cytoplasm. It catalyses the reaction tRNA(His) + L-histidine + ATP = L-histidyl-tRNA(His) + AMP + diphosphate + H(+). In Aliivibrio fischeri (strain ATCC 700601 / ES114) (Vibrio fischeri), this protein is Histidine--tRNA ligase.